A 205-amino-acid polypeptide reads, in one-letter code: Protease (205 aa).

Catalysis depends on residues His-54, Asp-71, and Cys-120.

The protein belongs to the peptidase C5 family. In terms of assembly, interacts with protease cofactor pVI-C; this interaction is necessary for protease activation.

It localises to the virion. The protein resides in the host nucleus. It carries out the reaction Cleaves proteins of the adenovirus and its host cell at two consensus sites: -Yaa-Xaa-Gly-Gly-|-Xaa- and -Yaa-Xaa-Gly-Xaa-|-Gly- (in which Yaa is Met, Ile or Leu, and Xaa is any amino acid).. With respect to regulation, requires DNA and protease cofactor for maximal activation. Inside nascent virions, becomes partially activated by binding to the viral DNA, allowing it to cleave the cofactor that binds to the protease and fully activates it. Actin, like the viral protease cofactor, seems to act as a cofactor in the cleavage of cytokeratin 18 and of actin itself. Its function is as follows. Cleaves viral precursor proteins (pTP, pIIIa, pVI, pVII, pVIII, and pX) inside newly assembled particles giving rise to mature virions. Protease complexed to its cofactor slides along the viral DNA to specifically locate and cleave the viral precursors. Mature virions have a weakened organization compared to the unmature virions, thereby facilitating subsequent uncoating. Without maturation, the particle lacks infectivity and is unable to uncoat. Late in adenovirus infection, in the cytoplasm, may participate in the cytoskeleton destruction. Cleaves host cell cytoskeletal keratins K7 and K18. In Bos taurus (Bovine), this protein is Protease.